The sequence spans 20 residues: Peptidase T (20 aa).

It belongs to the peptidase M20B family. Requires Zn(2+) as cofactor. Co(2+) is required as a cofactor.

Its subcellular location is the cell envelope. It carries out the reaction Release of the N-terminal residue from a tripeptide.. Inhibited by the chelating agents EDTA and 1,10-phenanthroline, by bestatin and amastatin, p-hydroxymercuribenzoate and some divalent cations at high concentration. Functionally, cleaves a wide range of dipeptides and tripeptides, but does not display activity against larger peptides. May have a role in the survival of F.nucleatum in the subgingival environment of the mouth. The protein is Peptidase T (pepT) of Fusobacterium nucleatum subsp. polymorphum (Fusobacterium polymorphum).